The following is a 55-amino-acid chain: Spermatid nuclear transition protein 1 (55 aa).

Positions 1-42 (MSTSRKLKTHGMRRGKNRAPHKGVKRGGSKRKYRKSVLKSRK) are enriched in basic residues. Positions 1-55 (MSTSRKLKTHGMRRGKNRAPHKGVKRGGSKRKYRKSVLKSRKRGDDASRNYRSHL) are disordered. 2 positions are modified to phosphoserine: Ser36 and Ser40.

This sequence belongs to the nuclear transition protein 1 family. As to expression, testis-specific.

It localises to the nucleus. It is found in the chromosome. Plays a key role in the replacement of histones to protamine in the elongating spermatids of mammals. In condensing spermatids, loaded onto the nucleosomes, where it promotes the recruitment and processing of protamines, which are responsible for histone eviction. The histone H2AB1-H2BC1/TH2B dimer is required for loading of TNP1 onto chromatin. The chain is Spermatid nuclear transition protein 1 from Mus musculus (Mouse).